We begin with the raw amino-acid sequence, 302 residues long: Ribostamycin:4-(gamma-L-glutamylamino)-(S)-2-hydroxybutanoyl-[BtrI acyl-carrier protein] 4-(gamma-L-glutamylamino)-(S)-2-hydroxybutanoate transferase (302 aa).

The enzyme catalyses 4-(gamma-L-glutamylamino)-(2S)-2-hydroxybutanoyl-[BtrI ACP] + ribostamycin = gamma-L-glutamyl-butirosin B + holo-[BtrI ACP] + H(+). It functions in the pathway antibiotic biosynthesis; butirosin biosynthesis. Its function is as follows. Aminoglycoside acyltransferase that attaches the (S)-4-amino-2-hydroxybutyrate (AHBA) side chain from the acyl carrier protein BtrI to the aminoglycoside ribostamycin in the biosynthetic pathway of butirosin. The AHBA side chain protects the antibiotic from several common resistance mechanisms. The polypeptide is Ribostamycin:4-(gamma-L-glutamylamino)-(S)-2-hydroxybutanoyl-[BtrI acyl-carrier protein] 4-(gamma-L-glutamylamino)-(S)-2-hydroxybutanoate transferase (btrH) (Niallia circulans (Bacillus circulans)).